Here is a 437-residue protein sequence, read N- to C-terminus: Nuclear envelope integral membrane protein 1 (437 aa).

An N-terminal signal peptide occupies residues 1-44; sequence MAGGIKVSVWSAVGPGPRCWGAGGGGGATWLLLVVAGCVVCGSA. N-linked (GlcNAc...) asparagine glycosylation is present at Asn-123. The next 5 helical transmembrane spans lie at 159-179, 183-203, 214-234, 244-264, and 288-308; these read PKLFLVFLLGLTLFFCGDLLS, IFYYSTGMSVGIVASLLIVIF, PIYVILVGGWSFSLYLIQLVF, YWHYLLSYILTVGFMSFAVCY, and GLMYSSIQIPHVAFALIVIAL. The a; required for its colocalization with lamins at the nuclear envelope stretch occupies residues 184 to 295; the sequence is FYYSTGMSVG…GLGLMYSSIQ (112 aa). A b; required for interaction with RAN-GTP region spans residues 334–403; the sequence is PVPPRLLTEE…LTPNEVSVHE (70 aa). The interval 334–437 is required for nuclear localization; sequence PVPPRLLTEE…PTFTQNNFLT (104 aa). Phosphoserine occurs at positions 366, 419, and 420. The segment covering 415–425 has biased composition (acidic residues); that stretch reads DEELSSEEEGS. Residues 415 to 437 form a disordered region; that stretch reads DEELSSEEEGSEYPTFTQNNFLT. Over residues 428-437 the composition is skewed to polar residues; it reads PTFTQNNFLT.

Belongs to the NEMP family. In terms of assembly, homooligomer. Interacts with RAN-GTP. Interacts with EMD. In terms of processing, phosphorylated. Phosphorylation may regulate its interaction with RAN-GTP. As to expression, in the ovary, expression is strongest in primordial follicle oocytes and rapidly declines as oocytes mature and move from the cortex (at protein level).

The protein resides in the nucleus inner membrane. The protein localises to the nucleus envelope. Together with EMD, contributes to nuclear envelope stiffness in germ cells. Required for female fertility. Essential for normal erythropoiesis. Required for efficient nuclear envelope opening and enucleation during the late stages of erythroblast maturation. This chain is Nuclear envelope integral membrane protein 1 (Nemp1), found in Mus musculus (Mouse).